Consider the following 361-residue polypeptide: Single-stranded DNA-binding protein 2 (361 aa).

N6-acetyllysine is present on Lys-6. Residues Ala-18 to Lys-50 form the LisH domain. Disordered stretches follow at residues Gly-147–Met-171 and Gly-194–Val-361. Gly residues predominate over residues Gly-204–Arg-219. Polar residues predominate over residues Thr-225–Ser-236. Residues Gly-246–Pro-256 are compositionally biased toward pro residues. Residues Gly-289–Gly-299 are compositionally biased toward gly residues. A compositionally biased stretch (polar residues) spans Ile-317–Gly-332. Ser-321 carries the post-translational modification Phosphoserine. At Thr-333 the chain carries Phosphothreonine. Residues Asn-346–Val-361 are compositionally biased toward polar residues.

Ubiquitous.

It is found in the nucleus. In Homo sapiens (Human), this protein is Single-stranded DNA-binding protein 2 (SSBP2).